A 1401-amino-acid polypeptide reads, in one-letter code: MAP kinase kinase kinase wis4 (1401 aa).

Disordered stretches follow at residues 67 to 99 and 176 to 205; these read HIPL…MSYT and QDSI…NDFS. Composition is skewed to polar residues over residues 72 to 99 and 176 to 191; these read PSHS…MSYT and QDSI…NQSL. Positions 1037–1306 constitute a Protein kinase domain; the sequence is WQQGHFVRSG…AVDLLTHPWI (270 aa). Residues 1043–1051 and Lys1066 contribute to the ATP site; that span reads VRSGMFGDV. The active-site Proton acceptor is the Asp1161.

This sequence belongs to the protein kinase superfamily. STE Ser/Thr protein kinase family. MAP kinase kinase kinase subfamily.

The catalysed reaction is L-seryl-[protein] + ATP = O-phospho-L-seryl-[protein] + ADP + H(+). It carries out the reaction L-threonyl-[protein] + ATP = O-phospho-L-threonyl-[protein] + ADP + H(+). Involved in a signal transduction pathway that is activated in under conditions of heat shock, oxidative stress or limited nutrition. Unlike win1, it is not activated by changes in the osmolarity of the extracellular environment. Activates the wis1 MAP kinase kinase by phosphorylation. The protein is MAP kinase kinase kinase wis4 (wis4) of Schizosaccharomyces pombe (strain 972 / ATCC 24843) (Fission yeast).